Here is a 106-residue protein sequence, read N- to C-terminus: Probable NADP-dependent dehydrogenase in aabA 3'region (106 aa).

4 to 28 (LITGASSGFGWEAAKLCVAKGHRVI) provides a ligand contact to NADP(+).

The protein belongs to the short-chain dehydrogenases/reductases (SDR) family.

In Dichelobacter nodosus (Bacteroides nodosus), this protein is Probable NADP-dependent dehydrogenase in aabA 3'region.